A 159-amino-acid chain; its full sequence is MQTPTLHGDGFLLTRLDTLCDMVRSNSMWYLTFGLACCAVEMMQAAASRYDMDRFGMIPRASPRQADLIIVAGTLTNKMAPAIRKIYDQMAEPRYVISMGSCANGGGYYHYSYSVARGCDRILPVDIYIPGCPPTAEALLYGLIQLQNKLKRPPAVIAR.

Residues Cys-37, Cys-38, Cys-102, and Cys-132 each contribute to the [4Fe-4S] cluster site.

The protein belongs to the complex I 20 kDa subunit family. In terms of assembly, NDH-1 is composed of 14 different subunits. Subunits NuoB, C, D, E, F, and G constitute the peripheral sector of the complex. Requires [4Fe-4S] cluster as cofactor.

Its subcellular location is the cell inner membrane. The catalysed reaction is a quinone + NADH + 5 H(+)(in) = a quinol + NAD(+) + 4 H(+)(out). In terms of biological role, NDH-1 shuttles electrons from NADH, via FMN and iron-sulfur (Fe-S) centers, to quinones in the respiratory chain. Couples the redox reaction to proton translocation (for every two electrons transferred, four hydrogen ions are translocated across the cytoplasmic membrane), and thus conserves the redox energy in a proton gradient. This Azoarcus sp. (strain BH72) protein is NADH-quinone oxidoreductase subunit B 2.